The following is a 127-amino-acid chain: Large ribosomal subunit protein bL12 (127 aa).

Belongs to the bacterial ribosomal protein bL12 family. In terms of assembly, homodimer. Part of the ribosomal stalk of the 50S ribosomal subunit. Forms a multimeric L10(L12)X complex, where L10 forms an elongated spine to which 2 to 4 L12 dimers bind in a sequential fashion. Binds GTP-bound translation factors.

In terms of biological role, forms part of the ribosomal stalk which helps the ribosome interact with GTP-bound translation factors. Is thus essential for accurate translation. The sequence is that of Large ribosomal subunit protein bL12 from Streptomyces avermitilis (strain ATCC 31267 / DSM 46492 / JCM 5070 / NBRC 14893 / NCIMB 12804 / NRRL 8165 / MA-4680).